Reading from the N-terminus, the 421-residue chain is MEKFIIKGGNPLEGKITISGSKNSALPILAATLLTPEECVIHRVPNLSDIRYMLEILKFLGAQVHYEKGTVRIKSKIVHSTAPYDLVRKMRASICILGPLIARCGQARVSLPGGCVIGDRPIDLHITGLQKLGADIEIIKGDVVAHGGILRGTSINLKGKYGSTVLGTDNVMMAACQAEGTTIIEGAACEPEVEDLAHFLSSMGAKISGMGTQQLIIEGVKELHGCEYTIITDRIEAGTFAVAAAMTKGNLLLEHAPVEHMGSVLEKLKDCGASIEIESQGIRVSRSGPLRAFEIVTAAYPGFPTDMQAQFCAMATVAEGTSKIVENIFPNRFMHISELKRLGAMIELSQNQALIHGTERLSGAPVMASDLRASAALVLAGLVAENTTEVHRVYHIDRGYEKIDEKLSSVGANITRVYSKI.

22-23 provides a ligand contact to phosphoenolpyruvate; that stretch reads KN. Residue Arg-91 participates in UDP-N-acetyl-alpha-D-glucosamine binding. Cys-115 functions as the Proton donor in the catalytic mechanism. Residue Cys-115 is modified to 2-(S-cysteinyl)pyruvic acid O-phosphothioketal. UDP-N-acetyl-alpha-D-glucosamine-binding positions include 120–124, Asp-306, and Ile-328; that span reads RPIDL.

It belongs to the EPSP synthase family. MurA subfamily.

The protein resides in the cytoplasm. It catalyses the reaction phosphoenolpyruvate + UDP-N-acetyl-alpha-D-glucosamine = UDP-N-acetyl-3-O-(1-carboxyvinyl)-alpha-D-glucosamine + phosphate. The protein operates within cell wall biogenesis; peptidoglycan biosynthesis. Functionally, cell wall formation. Adds enolpyruvyl to UDP-N-acetylglucosamine. The chain is UDP-N-acetylglucosamine 1-carboxyvinyltransferase from Methylacidiphilum infernorum (isolate V4) (Methylokorus infernorum (strain V4)).